Reading from the N-terminus, the 1178-residue chain is Pyruvate carboxylase, mitochondrial (1178 aa).

Residues 1 to 20 (MLKFRTVHGGLRLLGIRRTS) constitute a mitochondrion transit peptide. N6-acetyllysine occurs at positions 35 and 39. Positions 36-486 (PIKKVMVANR…DTQFIDENPE (451 aa)) constitute a Biotin carboxylation domain. The residue at position 79 (lysine 79) is an N6-acetyllysine; alternate. N6-succinyllysine; alternate is present on lysine 79. Residues lysine 148 and lysine 152 each carry the N6-acetyllysine modification. 2 residues coordinate ATP: lysine 152 and glutamate 236. The 198-residue stretch at 156–353 (RAIAIAAGVP…LVHAQIHVAE (198 aa)) folds into the ATP-grasp domain. Lysine 241 bears the N6-acetyllysine mark. Residue histidine 271 participates in ATP binding. Lysine 297 and lysine 319 each carry N6-acetyllysine. Arginine 328 is an active-site residue. Lysine 434 is modified (N6-acetyllysine). Residue lysine 442 is modified to N6-succinyllysine. Residues 563–832 (LLLMDTTFRD…DTEVPMERVF (270 aa)) form the Pyruvate carboxyltransferase domain. 571–575 (RDAHQ) is a substrate binding site. Aspartate 572 provides a ligand contact to Mn(2+). Lysine 589 is subject to N6-acetyllysine. Position 644 (arginine 644) interacts with substrate. N6-acetyllysine is present on residues lysine 661 and lysine 717. A Mn(2+)-binding site is contributed by lysine 741. At lysine 741 the chain carries N6-carboxylysine. An N6-acetyllysine modification is found at lysine 748. Positions 771 and 773 each coordinate Mn(2+). N6-acetyllysine is present on lysine 892. A substrate-binding site is contributed by threonine 908. An N6-acetyllysine mark is found at lysine 969 and lysine 992. Position 1003 is a phosphothreonine (threonine 1003). Lysine 1061, lysine 1090, and lysine 1124 each carry N6-acetyllysine. One can recognise a Biotinyl-binding domain in the interval 1109-1178 (KGQIGAPMPG…EGDDLILEIE (70 aa)). At lysine 1144 the chain carries N6-biotinyllysine.

In terms of assembly, homotetramer. Interacts (via the biotin carboxylation domain) with SIRT4. Biotin is required as a cofactor. Requires Mn(2+) as cofactor. Post-translationally, acetylation of Lys-748 might play a role in catalytic activity regulation.

It is found in the mitochondrion matrix. The enzyme catalyses hydrogencarbonate + pyruvate + ATP = oxaloacetate + ADP + phosphate + H(+). The protein operates within carbohydrate biosynthesis; gluconeogenesis. In terms of biological role, pyruvate carboxylase catalyzes a 2-step reaction, involving the ATP-dependent carboxylation of the covalently attached biotin in the first step and the transfer of the carboxyl group to pyruvate in the second. Catalyzes in a tissue specific manner, the initial reactions of glucose (liver, kidney) and lipid (adipose tissue, liver, brain) synthesis from pyruvate. The protein is Pyruvate carboxylase, mitochondrial of Homo sapiens (Human).